Consider the following 93-residue polypeptide: UPF0223 protein gbs1030 (93 aa).

It belongs to the UPF0223 family.

In Streptococcus agalactiae serotype III (strain NEM316), this protein is UPF0223 protein gbs1030.